A 46-amino-acid chain; its full sequence is Photosystem II reaction center protein K (46 aa).

A propeptide spanning residues 1 to 9 (MLILFNTFA) is cleaved from the precursor. A helical membrane pass occupies residues 25–45 (LPLIPLFFFLLVFVWQAAVGF).

Belongs to the PsbK family. In terms of assembly, PSII is composed of 1 copy each of membrane proteins PsbA, PsbB, PsbC, PsbD, PsbE, PsbF, PsbH, PsbI, PsbJ, PsbK, PsbL, PsbM, PsbT, PsbX, PsbY, Psb30/Ycf12, peripheral proteins PsbO, CyanoQ (PsbQ), PsbU, PsbV and a large number of cofactors. It forms dimeric complexes.

The protein localises to the cellular thylakoid membrane. In terms of biological role, one of the components of the core complex of photosystem II (PSII). PSII is a light-driven water:plastoquinone oxidoreductase that uses light energy to abstract electrons from H(2)O, generating O(2) and a proton gradient subsequently used for ATP formation. It consists of a core antenna complex that captures photons, and an electron transfer chain that converts photonic excitation into a charge separation. In Prochlorococcus marinus (strain MIT 9301), this protein is Photosystem II reaction center protein K.